The sequence spans 696 residues: uncharacterized protein (696 aa).

A run of 10 helical transmembrane segments spans residues 38 to 58, 107 to 127, 215 to 235, 245 to 265, 292 to 312, 329 to 349, 380 to 400, 402 to 422, 433 to 453, and 457 to 477; these read IISIISGIFIGLTAALLNALA, LIYVSVSVGFAFIATTLGYVV, AMASGIAASFNAPVGGVIFAL, SLFTGSIWYEFLCSASSVVAL, TLPFIFISILCGCLGSVLIYL, VFFVIFLSLITSLTAYAILGE, FWVTAIVLFTSALLGLLLTSA, FGAAIPTGIIVPSLAIGACIG, FPSLAGTSIYGVIGSIAFLSS, and LVVALVVILFELTGALNIALP. 2 consecutive CBS domains span residues 527-587 and 617-674; these read RSPE…PMSS and IHPT…THTG.

The protein belongs to the chloride channel (TC 2.A.49) family.

Its subcellular location is the membrane. In terms of biological role, voltage-gated chloride channel. This is an uncharacterized protein from Schizosaccharomyces pombe (strain 972 / ATCC 24843) (Fission yeast).